The chain runs to 349 residues: Probable tRNA pseudouridine synthase B (349 aa).

Aspartate 41 functions as the Nucleophile in the catalytic mechanism. The PUA domain maps to 207-279 (YPKVIVKETA…KVIDIDNVLI (73 aa)). The segment covering 300 to 309 (IPVQKPERKL) has biased composition (basic and acidic residues). The segment at 300-349 (IPVQKPERKLHGNLQGSQEWKDTGNRGNPKRGGTGSKGFSSGFRKRKAKR) is disordered.

The protein belongs to the pseudouridine synthase TruB family. Type 2 subfamily.

The catalysed reaction is uridine(55) in tRNA = pseudouridine(55) in tRNA. Its function is as follows. Could be responsible for synthesis of pseudouridine from uracil-55 in the psi GC loop of transfer RNAs. The chain is Probable tRNA pseudouridine synthase B from Picrophilus torridus (strain ATCC 700027 / DSM 9790 / JCM 10055 / NBRC 100828 / KAW 2/3).